The sequence spans 308 residues: uncharacterized protein (308 aa).

The stretch at 212-242 (EADKMTIDYMRELDNLQRQYDGLVDEDKALH) forms a coiled coil.

This is an uncharacterized protein from Ostreid herpesvirus 1 (isolate France) (OsHV-1).